Reading from the N-terminus, the 466-residue chain is Glutamate--tRNA ligase (466 aa).

Residues 9–19 (PSPTGDLHVGS) carry the 'HIGH' region motif. A 'KMSKS' region motif is present at residues 237-241 (KLSKR). Lys-240 provides a ligand contact to ATP.

The protein belongs to the class-I aminoacyl-tRNA synthetase family. Glutamate--tRNA ligase type 1 subfamily. As to quaternary structure, monomer.

Its subcellular location is the cytoplasm. The enzyme catalyses tRNA(Glu) + L-glutamate + ATP = L-glutamyl-tRNA(Glu) + AMP + diphosphate. In terms of biological role, catalyzes the attachment of glutamate to tRNA(Glu) in a two-step reaction: glutamate is first activated by ATP to form Glu-AMP and then transferred to the acceptor end of tRNA(Glu). The polypeptide is Glutamate--tRNA ligase (Baumannia cicadellinicola subsp. Homalodisca coagulata).